We begin with the raw amino-acid sequence, 564 residues long: Septation ring formation regulator EzrA (564 aa).

At Met1–Phe4 the chain is on the extracellular side. A helical transmembrane segment spans residues Ile5–Met23. Topologically, residues Arg24–Glu564 are cytoplasmic. Coiled-coil stretches lie at residues Val84 to Thr126, Glu165 to Glu223, Met271 to Lys303, and Val350 to Leu435.

Belongs to the EzrA family.

It localises to the cell membrane. In terms of biological role, negative regulator of FtsZ ring formation; modulates the frequency and position of FtsZ ring formation. Inhibits FtsZ ring formation at polar sites. Interacts either with FtsZ or with one of its binding partners to promote depolymerization. The polypeptide is Septation ring formation regulator EzrA (Staphylococcus epidermidis (strain ATCC 35984 / DSM 28319 / BCRC 17069 / CCUG 31568 / BM 3577 / RP62A)).